The following is a 513-amino-acid chain: Flavonoid 3',5'-hydroxylase (513 aa).

Position 446 (Cys446) interacts with heme.

Belongs to the cytochrome P450 family. Heme is required as a cofactor. Hypocotyl tissues.

It catalyses the reaction a 3',5'-unsubstituted flavanone + 2 reduced [NADPH--hemoprotein reductase] + 2 O2 = a 3',5'-dihydroxyflavanone + 2 oxidized [NADPH--hemoprotein reductase] + 2 H2O + 2 H(+). It participates in pigment biosynthesis; anthocyanin biosynthesis. Functionally, catalyzes the 3'5'-hydroxylation of naringenin and eriodictyol to form 5,7,3,'4',5'-pentahydroxyflavanone and 3',5'-hydroxylation of dihydrokaempferol and dihydroquercetin to form dihydromyricetin. This is Flavonoid 3',5'-hydroxylase (CYP75A2) from Solanum melongena (Eggplant).